Consider the following 1813-residue polypeptide: Sucrase-isomaltase, intestinal (1813 aa).

The Cytoplasmic portion of the chain corresponds to 1–12; it reads MARKKSSGLKIT. Residue serine 7 is modified to Phosphoserine; by PKA. A helical; Signal-anchor for type II membrane protein membrane pass occupies residues 13–32; that stretch reads LIVLLAIVTIIAIALVAILP. At 33 to 1813 the chain is on the lumenal side; it reads TKTPAVELVS…LDEPIEISWT (1781 aa). The P-type 1 domain occupies 46–95; the sequence is GKCPSAENDRLDEKINCIPDQFPTQALCAMQGCCWNPRNESPTPWCSFAN. Cystine bridges form between cysteine 48-cysteine 79, cysteine 62-cysteine 78, and cysteine 73-cysteine 91. An isomaltase region spans residues 95 to 991; sequence NNHGYEFEKI…DLELNTATAR (897 aa). N-linked (GlcNAc...) asparagine glycosylation is present at asparagine 127. Substrate contacts are provided by aspartate 250 and aspartate 374. Tyrosine 377 carries the post-translational modification Sulfotyrosine. Asparagine 388 is a glycosylation site (N-linked (GlcNAc...) asparagine). Aspartate 491 serves as the catalytic Nucleophile; for isomaltase activity. Cysteine 506 and cysteine 531 form a disulfide bridge. Position 574 (arginine 574) interacts with substrate. Aspartate 590 acts as the For isomaltase activity in catalysis. A disulfide bridge connects residues cysteine 621 and cysteine 632. Histidine 648 provides a ligand contact to substrate. N-linked (GlcNAc...) asparagine glycans are attached at residues asparagine 669, asparagine 791, asparagine 896, and asparagine 911. Residues 917–962 enclose the P-type 2 domain; it reads NQVSLDSEKIDCFPDNNPENKQNCEERGCLWEPNSAAEGPRCYFPK. The sucrase stretch occupies residues 992–1813; the sequence is IKMPSNPISV…LDEPIEISWT (822 aa). N-linked (GlcNAc...) asparagine glycans are attached at residues asparagine 1221 and asparagine 1289. Tyrosine 1294 is modified (sulfotyrosine). N-linked (GlcNAc...) asparagine glycans are attached at residues asparagine 1326 and asparagine 1340. Tyrosine 1368 and tyrosine 1371 each carry sulfotyrosine. The active-site Nucleophile; for sucrase activity is aspartate 1380. Residue glutamate 1383 is the For sucrase activity of the active site. Residue asparagine 1432 is glycosylated (N-linked (GlcNAc...) asparagine). Catalysis depends on aspartate 1486, which acts as the Proton donor; for sucrase activity. 5 N-linked (GlcNAc...) asparagine glycosylation sites follow: asparagine 1521, asparagine 1545, asparagine 1558, asparagine 1703, and asparagine 1772.

The protein belongs to the glycosyl hydrolase 31 family. The resulting sucrase and isomaltase subunits stay associated with one another in a complex by non-covalent linkages. In terms of processing, the precursor is proteolytically cleaved when exposed to pancreatic proteases in the intestinal lumen. Post-translationally, sulfated.

The protein localises to the apical cell membrane. The enzyme catalyses Hydrolysis of sucrose and maltose by an alpha-D-glucosidase-type action.. It catalyses the reaction Hydrolysis of (1-&gt;6)-alpha-D-glucosidic linkages in some oligosaccharides produced from starch and glycogen by alpha-amylase, and in isomaltose.. Plays an important role in the final stage of carbohydrate digestion. Isomaltase activity is specific for both alpha-1,4- and alpha-1,6-oligosaccharides. In Suncus murinus (Asian house shrew), this protein is Sucrase-isomaltase, intestinal (SI).